Here is a 180-residue protein sequence, read N- to C-terminus: uncharacterized protein (180 aa).

The segment at 1–93 is disordered; the sequence is MPSSVPKTSI…LPRRRNPGWV (93 aa). Low complexity-rich tracts occupy residues 9–25 and 47–64; these read SIESLGSPSSLSSSQAS and LTSSTESLGYLSSLSSSQ.

This is an uncharacterized protein from Homo sapiens (Human).